The following is a 224-amino-acid chain: Magnesium-protoporphyrin O-methyltransferase (224 aa).

This sequence belongs to the class I-like SAM-binding methyltransferase superfamily. Magnesium protoporphyrin O-methyltransferase family.

The catalysed reaction is Mg-protoporphyrin IX + S-adenosyl-L-methionine = Mg-protoporphyrin IX 13-monomethyl ester + S-adenosyl-L-homocysteine. It functions in the pathway porphyrin-containing compound metabolism; bacteriochlorophyll biosynthesis (light-independent). Its function is as follows. Converts Mg-protoporphyrin IX to Mg-protoporphyrin IX methylester using S-adenosyl-L-methionine as a cofactor. This chain is Magnesium-protoporphyrin O-methyltransferase (bchM), found in Rhodobacter capsulatus (Rhodopseudomonas capsulata).